Here is a 130-residue protein sequence, read N- to C-terminus: MAQVQYYGTGRRKSSVARVRLVPGEGRIVVNNREISEHIPSAALIEDIKQPLTLTETAGTYDVLVNVHGGGLSGQAGAIRHGIARALLEADPEYRTTLKRAGLLTRDARMKERKKYGLKGARRAPQFSKR.

The protein belongs to the universal ribosomal protein uS9 family. As to quaternary structure, part of the 30S ribosomal subunit.

The sequence is that of Small ribosomal subunit protein uS9 (rpsI) from Bacillus subtilis (strain 168).